The primary structure comprises 943 residues: UvrABC system protein A (943 aa).

31–38 (GLSGSGKS) lines the ATP pocket. Residues 253–280 (CPHCGYSVPELEPRLFSFNNPAGACPTC) form a C4-type zinc finger. 2 consecutive ABC transporter domains span residues 310 to 587 (WDRR…PHSI) and 607 to 937 (LDKK…RFLK). Residue 640–647 (GVSGSGKS) participates in ATP binding. The segment at 740–766 (CEACQGDGVIKVEMHFLPDVYVPCEQC) adopts a C4-type zinc-finger fold.

It belongs to the ABC transporter superfamily. UvrA family. Forms a heterotetramer with UvrB during the search for lesions.

The protein localises to the cytoplasm. Functionally, the UvrABC repair system catalyzes the recognition and processing of DNA lesions. UvrA is an ATPase and a DNA-binding protein. A damage recognition complex composed of 2 UvrA and 2 UvrB subunits scans DNA for abnormalities. When the presence of a lesion has been verified by UvrB, the UvrA molecules dissociate. In Pasteurella multocida (strain Pm70), this protein is UvrABC system protein A.